The primary structure comprises 209 residues: Transcription factor 23 (209 aa).

Disordered regions lie at residues 1-20 (MSQE…GHNK) and 54-85 (LSRA…ARER). Positions 72 to 85 (GRSEASPENAARER) are enriched in basic and acidic residues. In terms of domain architecture, bHLH spans 75 to 127 (EASPENAARERTRVKTLRQAFLALQAALPAVPPDTKLSKLDVLVLATSYIAHL).

Forms inactive heterodimeric complex with TCF3. In terms of tissue distribution, highly expressed in the uterus (predominantly in myometrium), ovary, and testis. Expression in the uterus is higher in the diestrus phase than in the estrus phase and reaches a maximum at 7.5 dpc. Expression declines towards the time of delivery and returns to the non-pregnant level 4 days after delivery. Low expression seen in lung, heart, intestine, and spleen.

The protein localises to the nucleus. Its function is as follows. Inhibits E-box-mediated binding and transactivation of bHLH factors. Inhibitory effect is similar to that of ID proteins. Inhibits the formation of TCF3 and MYOD1 homodimers and heterodimers. Lacks DNA binding activity. May be involved in the regulation or modulation of smooth muscle contraction of the uterus during pregnancy and particularly around the time of delivery. Seems to play a role in the inhibition of myogenesis. This Mus musculus (Mouse) protein is Transcription factor 23 (Tcf23).